The following is a 396-amino-acid chain: Tryptophan synthase beta chain (396 aa).

The residue at position 86 (Lys86) is an N6-(pyridoxal phosphate)lysine.

The protein belongs to the TrpB family. In terms of assembly, tetramer of two alpha and two beta chains. It depends on pyridoxal 5'-phosphate as a cofactor.

The catalysed reaction is (1S,2R)-1-C-(indol-3-yl)glycerol 3-phosphate + L-serine = D-glyceraldehyde 3-phosphate + L-tryptophan + H2O. It participates in amino-acid biosynthesis; L-tryptophan biosynthesis; L-tryptophan from chorismate: step 5/5. Its function is as follows. The beta subunit is responsible for the synthesis of L-tryptophan from indole and L-serine. The polypeptide is Tryptophan synthase beta chain (Vibrio cholerae serotype O1 (strain ATCC 39315 / El Tor Inaba N16961)).